We begin with the raw amino-acid sequence, 122 residues long: MARIAGVNIPTAKRVPIALTYIHGIGDFVAGQICDAVGIDRARRVNELSDAEVLSIREYIDANVTVEGDLRRETSMNIKRLMDLGCYRGLRHRRGLPVRGQRTHTNARTRKGPAKAIAGKKK.

The disordered stretch occupies residues 99-122; the sequence is RGQRTHTNARTRKGPAKAIAGKKK.

It belongs to the universal ribosomal protein uS13 family. In terms of assembly, part of the 30S ribosomal subunit. Forms a loose heterodimer with protein S19. Forms two bridges to the 50S subunit in the 70S ribosome.

Its function is as follows. Located at the top of the head of the 30S subunit, it contacts several helices of the 16S rRNA. In the 70S ribosome it contacts the 23S rRNA (bridge B1a) and protein L5 of the 50S subunit (bridge B1b), connecting the 2 subunits; these bridges are implicated in subunit movement. Contacts the tRNAs in the A and P-sites. The protein is Small ribosomal subunit protein uS13 of Cereibacter sphaeroides (strain ATCC 17029 / ATH 2.4.9) (Rhodobacter sphaeroides).